The sequence spans 389 residues: Lipid-A-disaccharide synthase (389 aa).

This sequence belongs to the LpxB family.

The catalysed reaction is a lipid X + a UDP-2-N,3-O-bis[(3R)-3-hydroxyacyl]-alpha-D-glucosamine = a lipid A disaccharide + UDP + H(+). It functions in the pathway bacterial outer membrane biogenesis; LPS lipid A biosynthesis. In terms of biological role, condensation of UDP-2,3-diacylglucosamine and 2,3-diacylglucosamine-1-phosphate to form lipid A disaccharide, a precursor of lipid A, a phosphorylated glycolipid that anchors the lipopolysaccharide to the outer membrane of the cell. The sequence is that of Lipid-A-disaccharide synthase from Burkholderia lata (strain ATCC 17760 / DSM 23089 / LMG 22485 / NCIMB 9086 / R18194 / 383).